The following is an 865-amino-acid chain: Xylosyltransferase 2 (865 aa).

Residues 1–15 (MVASARVQKLVRRYK) are Cytoplasmic-facing. A helical; Signal-anchor for type II membrane protein transmembrane segment spans residues 16-36 (LAIATALAILLLQGLVVWSFS). Residues 37–865 (GLEEDEAGEK…GPVKADGRLR (829 aa)) are Lumenal-facing. A disordered region spans residues 41-157 (DEAGEKGRQR…EGAPQPTDNG (117 aa)). Residues 53–65 (RPLDPGEGSKDTD) show a composition bias toward basic and acidic residues. The segment covering 73–82 (STGRRHGRWR) has biased composition (basic residues). N122 carries an N-linked (GlcNAc...) asparagine glycan. Residues 125–137 (GAAAGEALVGAAG) are compositionally biased toward low complexity. Intrachain disulfides connect C162-C190, C206-C448, C467-C480, and C469-C478. UDP-alpha-D-xylose is bound by residues V239, D267, and 296-298 (TIW). A glycan (N-linked (GlcNAc...) asparagine) is linked at N327. 400 to 401 (DW) provides a ligand contact to UDP-alpha-D-xylose. Residues S481 and 504–505 (RK) contribute to the UDP-alpha-D-xylose site. Cystine bridges form between C581/C833 and C826/C839. An N-linked (GlcNAc...) asparagine glycan is attached at N683. The segment at 846-865 (SLSPDPKSELGPVKADGRLR) is disordered.

It belongs to the glycosyltransferase 14 family. XylT subfamily. Monomer. Mg(2+) serves as cofactor. Mn(2+) is required as a cofactor. Post-translationally, contains disulfide bonds. Widely expressed. Expressed at higher level in kidney and pancreas.

It localises to the golgi apparatus membrane. Its subcellular location is the secreted. The catalysed reaction is UDP-alpha-D-xylose + L-seryl-[protein] = 3-O-(beta-D-xylosyl)-L-seryl-[protein] + UDP + H(+). The protein operates within glycan metabolism; chondroitin sulfate biosynthesis. It participates in glycan metabolism; heparan sulfate biosynthesis. In terms of biological role, catalyzes the first step in the biosynthesis of chondroitin sulfate, heparan sulfate and dermatan sulfate proteoglycans, such as DCN. Transfers D-xylose from UDP-D-xylose to specific serine residues of the core protein. This Homo sapiens (Human) protein is Xylosyltransferase 2 (XYLT2).